Consider the following 230-residue polypeptide: Small ribosomal subunit protein uS3 (230 aa).

Residues 39–107 (VRNYLFKKLI…PVHINIEEIK (69 aa)) enclose the KH type-2 domain.

It belongs to the universal ribosomal protein uS3 family. In terms of assembly, part of the 30S ribosomal subunit. Forms a tight complex with proteins S10 and S14.

Functionally, binds the lower part of the 30S subunit head. Binds mRNA in the 70S ribosome, positioning it for translation. The polypeptide is Small ribosomal subunit protein uS3 (Vesicomyosocius okutanii subsp. Calyptogena okutanii (strain HA)).